We begin with the raw amino-acid sequence, 105 residues long: ATP synthase subunit c (105 aa).

A run of 2 helical transmembrane segments spans residues S32–G52 and V78–I98.

Belongs to the ATPase C chain family. As to quaternary structure, F-type ATPases have 2 components, F(1) - the catalytic core - and F(0) - the membrane proton channel. F(1) has five subunits: alpha(3), beta(3), gamma(1), delta(1), epsilon(1). F(0) has three main subunits: a(1), b(2) and c(10-14). The alpha and beta chains form an alternating ring which encloses part of the gamma chain. F(1) is attached to F(0) by a central stalk formed by the gamma and epsilon chains, while a peripheral stalk is formed by the delta and b chains.

It is found in the cell inner membrane. In terms of biological role, f(1)F(0) ATP synthase produces ATP from ADP in the presence of a proton or sodium gradient. F-type ATPases consist of two structural domains, F(1) containing the extramembraneous catalytic core and F(0) containing the membrane proton channel, linked together by a central stalk and a peripheral stalk. During catalysis, ATP synthesis in the catalytic domain of F(1) is coupled via a rotary mechanism of the central stalk subunits to proton translocation. Key component of the F(0) channel; it plays a direct role in translocation across the membrane. A homomeric c-ring of between 10-14 subunits forms the central stalk rotor element with the F(1) delta and epsilon subunits. The sequence is that of ATP synthase subunit c from Helicobacter pylori (strain ATCC 700392 / 26695) (Campylobacter pylori).